The chain runs to 218 residues: Ribosomal RNA large subunit methyltransferase E (218 aa).

Residues Gly-64, Trp-66, Asp-92, Asp-108, and Asp-133 each contribute to the S-adenosyl-L-methionine site. Lys-173 acts as the Proton acceptor in catalysis.

The protein belongs to the class I-like SAM-binding methyltransferase superfamily. RNA methyltransferase RlmE family.

It localises to the cytoplasm. The catalysed reaction is uridine(2552) in 23S rRNA + S-adenosyl-L-methionine = 2'-O-methyluridine(2552) in 23S rRNA + S-adenosyl-L-homocysteine + H(+). Specifically methylates the uridine in position 2552 of 23S rRNA at the 2'-O position of the ribose in the fully assembled 50S ribosomal subunit. In Paracidovorax citrulli (strain AAC00-1) (Acidovorax citrulli), this protein is Ribosomal RNA large subunit methyltransferase E.